The chain runs to 201 residues: Beta-lactamase inhibitory protein (201 aa).

The N-terminal stretch at methionine 1 to alanine 36 is a signal peptide. 2 consecutive repeat copies span residues alanine 37–leucine 112 and alanine 116–valine 201. Intrachain disulfides connect cysteine 66/cysteine 78 and cysteine 145/cysteine 167.

As to quaternary structure, interacts with E.coli beta-lactamase TEM-1; interaction inhibits hydrolysis of beta-lactam antibiotics. Interacts with K.pneumoniae beta-lactamase SHV-1. Interacts with K.pneumoniae beta-lactamases KPC-2 and KPC-3; interaction inhibits hydrolysis of beta-lactam antibiotics. Interacts with E.coli beta-lactamases CTX-M-14 and CTX-M-15; interaction inhibits hydrolysis of beta-lactam antibiotics.

It is found in the secreted. Inhibits a wide variety of beta lactamases. The chain is Beta-lactamase inhibitory protein from Streptomyces clavuligerus.